We begin with the raw amino-acid sequence, 905 residues long: Tight junction protein ZO-3 (905 aa).

A PDZ 1 domain is found at 11 to 93; that stretch reads TATLYKDPRR…TANVTVKRPR (83 aa). Positions 92–167 are disordered; the sequence is PRRVQLPATK…GGGSEANGLD (76 aa). Phosphoserine occurs at positions 111 and 128. Residues 124-133 are compositionally biased toward low complexity; sequence GDSSSGSGRS. Basic residues predominate over residues 139 to 155; it reads RRSRAGRRGRVGSHGRR. Phosphoserine is present on residues S156, S157, S161, S195, and S311. Positions 187–264 constitute a PDZ 2 domain; sequence SVLVKRRNSE…ELTLLVLRDS (78 aa). The tract at residues 289–367 is disordered; the sequence is LTSELSQAPP…QSLEDRGYSP (79 aa). The residue at position 317 (T317) is a Phosphothreonine. Residues S319, S343, and S359 each carry the phosphoserine modification. Positions 368-434 constitute a PDZ 3 domain; it reads DTRVVSFPKG…LTREEAVQFL (67 aa). One can recognise an SH3 domain in the interval 464 to 541; sequence GDSFYIRTHF…PNQSRAEQLA (78 aa). The region spanning 573–754 is the Guanylate kinase-like domain; that stretch reads RRGTKKASTQ…WYQEVKAVIQ (182 aa). S584 carries the phosphoserine modification. Disordered stretches follow at residues 773-818 and 850-905; these read EDLD…PQDV and TDKW…ATDL. Positions 851–877 are enriched in basic and acidic residues; it reads DKWETQADSHYTQDQRRQDSMRTYKHE. S891 and S892 each carry phosphoserine.

It belongs to the MAGUK family. Interacts with occludin OCLN, claudins and TPJ1. Interacts with PATJ. Interacts with UBN1. Interacts with FASLG. Interacts with CCND1. In terms of processing, phosphorylated. Is concentrated in various types of epithelium, in tissues such as the lung, liver and kidney, but not in endothelium or at cadherin-based cell-cell adhesion sites.

The protein resides in the cell membrane. The protein localises to the cell junction. It localises to the tight junction. Its subcellular location is the nucleus. In terms of biological role, tjp1, Tjp2, and Tjp3 are closely related scaffolding proteins that link tight junction (TJ) transmembrane proteins such as claudins, junctional adhesion molecules, and occludin to the actin cytoskeleton. The tight junction acts to limit movement of substances through the paracellular space and as a boundary between the compositionally distinct apical and basolateral plasma membrane domains of epithelial and endothelial cells. Binds and recruits PatJ to tight junctions where it connects and stabilizes apical and lateral components of tight junctions. Promotes cell-cycle progression through the sequestration of cyclin D1 (Ccnd1) at tight junctions during mitosis which prevents Ccnd1 degradation during M-phase and enables S-phase transition. With Tjp1 and Tjp2, participates in the junctional retention and stability of the transcription factor DbpA, but is not involved in its shuttling to the nucleus. Contrary to Tjp2, Tjp3 is dispensable for individual viability, embryonic development, epithelial differentiation, and the establishment of TJs, at least in the laboratory environment. In Mus musculus (Mouse), this protein is Tight junction protein ZO-3 (Tjp3).